A 410-amino-acid polypeptide reads, in one-letter code: uncharacterized protein (410 aa).

A compositionally biased stretch (polar residues) spans 178-187 (QKNHRNQLST). 2 disordered regions span residues 178–203 (QKNH…QEHQ) and 236–272 (RAEQ…PTVQ). Low complexity predominate over residues 188 to 198 (QKKQQQALQKA). Residues 236–263 (RAEQAAREQEKREREALAQRQKAEEKRT) show a composition bias toward basic and acidic residues.

This is an uncharacterized protein from Haemophilus influenzae (strain ATCC 51907 / DSM 11121 / KW20 / Rd).